The following is a 400-amino-acid chain: Large envelope protein (400 aa).

At Met-1 the chain carries N-acetylmethionine. A disordered region spans residues 1–20 (MGGWSAKPRKGMGTNLSVPN). Residue Gly-2 is the site of N-myristoyl glycine; by host attachment. Positions 2–119 (GGWSAKPRKG…PPLRDSHPQA (118 aa)) are pre-S1. The segment at 2 to 174 (GGWSAKPRKG…SSRTGDPALN (173 aa)) is pre-S. Residues 2–181 (GGWSAKPRKG…ALNMENITSG (180 aa)) lie on the Virion surface; in external conformation side of the membrane. Topologically, residues 2–253 (GGWSAKPRKG…PGYRWMCLRR (252 aa)) are intravirion; in internal conformation. N-linked (GlcNAc...) asparagine glycosylation is present at Trp-4. The pre-S2 stretch occupies residues 120 to 174 (MQWNSTAFQQALQDPRVRGLFFPAGGSSSGTVNPAPNIASHISSISSRTGDPALN). Residues 182 to 202 (FLGPLLVLQAGFFLLTRILTI) traverse the membrane as a helical segment. The Intravirion; in external conformation segment spans residues 203 to 253 (PQSLDSWWTSLNFLGGSPVCLGQNSQSPTSNHSPTSCPPICPGYRWMCLRR). The chain crosses the membrane as a helical span at residues 254–274 (FIIFLFILLLCLIFLLVLLDY). At 275–348 (QGMLPVCPLI…WASVRFSWLS (74 aa)) the chain is on the virion surface side. N-linked (GlcNAc...) asparagine; by host glycosylation is present at Asn-320. Residues 349–369 (LLVPFVQWFVGLSPTVWLSVI) form a helical membrane-spanning segment. The Intravirion segment spans residues 370–375 (WMMWYW). The chain crosses the membrane as a helical span at residues 376-398 (GPSLYNILSPFIPLLPIFFCLWV). Residues 399 to 400 (YI) lie on the Virion surface side of the membrane.

This sequence belongs to the orthohepadnavirus major surface antigen family. In its internal form (Li-HBsAg), interacts with the capsid protein and with the isoform S. Interacts with host chaperone CANX. As to quaternary structure, associates with host chaperone CANX through its pre-S2 N glycan; this association may be essential for isoform M proper secretion. In terms of assembly, interacts with isoform L. Interacts with the antigens of satellite virus HDV (HDVAgs); this interaction is required for encapsidation of HDV genomic RNA. Post-translationally, isoform M is N-terminally acetylated by host at a ratio of 90%, and N-glycosylated by host at the pre-S2 region. Myristoylated.

The protein resides in the virion membrane. The large envelope protein exists in two topological conformations, one which is termed 'external' or Le-HBsAg and the other 'internal' or Li-HBsAg. In its external conformation the protein attaches the virus to cell receptors and thereby initiating infection. This interaction determines the species specificity and liver tropism. This attachment induces virion internalization predominantly through caveolin-mediated endocytosis. The large envelope protein also assures fusion between virion membrane and endosomal membrane. In its internal conformation the protein plays a role in virion morphogenesis and mediates the contact with the nucleocapsid like a matrix protein. Its function is as follows. The middle envelope protein plays an important role in the budding of the virion. It is involved in the induction of budding in a nucleocapsid independent way. In this process the majority of envelope proteins bud to form subviral lipoprotein particles of 22 nm of diameter that do not contain a nucleocapsid. This is Large envelope protein from Hepatitis B virus genotype A1 subtype adw2 (isolate Southern-Africa/Cai) (HBV-A).